A 180-amino-acid polypeptide reads, in one-letter code: Inorganic pyrophosphatase (180 aa).

Lysine 30, arginine 44, and tyrosine 56 together coordinate substrate. Residues aspartate 66, aspartate 71, and aspartate 103 each coordinate Mg(2+). Position 142 (tyrosine 142) interacts with substrate.

Belongs to the PPase family. Homohexamer. The cofactor is Mg(2+).

Its subcellular location is the cytoplasm. The catalysed reaction is diphosphate + H2O = 2 phosphate + H(+). In terms of biological role, catalyzes the hydrolysis of inorganic pyrophosphate (PPi) forming two phosphate ions. This Buchnera aphidicola subsp. Schizaphis graminum (strain Sg) protein is Inorganic pyrophosphatase.